We begin with the raw amino-acid sequence, 488 residues long: L-arabinose isomerase 1 (488 aa).

Residues glutamate 306, glutamate 331, histidine 348, and histidine 447 each coordinate Mn(2+).

Belongs to the arabinose isomerase family. The cofactor is Mn(2+).

It carries out the reaction beta-L-arabinopyranose = L-ribulose. It participates in carbohydrate degradation; L-arabinose degradation via L-ribulose; D-xylulose 5-phosphate from L-arabinose (bacterial route): step 1/3. Its function is as follows. Catalyzes the conversion of L-arabinose to L-ribulose. The protein is L-arabinose isomerase 1 of Clostridium acetobutylicum (strain ATCC 824 / DSM 792 / JCM 1419 / IAM 19013 / LMG 5710 / NBRC 13948 / NRRL B-527 / VKM B-1787 / 2291 / W).